A 306-amino-acid chain; its full sequence is 4-hydroxy-tetrahydrodipicolinate synthase (306 aa).

Thr-46 lines the pyruvate pocket. Catalysis depends on Tyr-134, which acts as the Proton donor/acceptor. Lys-162 serves as the catalytic Schiff-base intermediate with substrate. A pyruvate-binding site is contributed by Val-204.

It belongs to the DapA family. As to quaternary structure, homotetramer; dimer of dimers.

The protein localises to the cytoplasm. It catalyses the reaction L-aspartate 4-semialdehyde + pyruvate = (2S,4S)-4-hydroxy-2,3,4,5-tetrahydrodipicolinate + H2O + H(+). Its pathway is amino-acid biosynthesis; L-lysine biosynthesis via DAP pathway; (S)-tetrahydrodipicolinate from L-aspartate: step 3/4. Its function is as follows. Catalyzes the condensation of (S)-aspartate-beta-semialdehyde [(S)-ASA] and pyruvate to 4-hydroxy-tetrahydrodipicolinate (HTPA). This is 4-hydroxy-tetrahydrodipicolinate synthase from Synechococcus sp. (strain JA-2-3B'a(2-13)) (Cyanobacteria bacterium Yellowstone B-Prime).